Reading from the N-terminus, the 303-residue chain is Light-independent protochlorophyllide reductase iron-sulfur ATP-binding protein (303 aa).

The tract at residues 1–24 is disordered; sequence MSSVLERPAAPAILPSRQDGEGSV. Residues 47–52 and Lys76 contribute to the ATP site; that span reads GIGKST. Ser51 is a binding site for Mg(2+). 2 residues coordinate [4Fe-4S] cluster: Cys132 and Cys166. Residues 217–218 and 241–243 contribute to the ATP site; these read NR and PDL.

It belongs to the NifH/BchL/ChlL family. As to quaternary structure, homodimer. Protochlorophyllide reductase is composed of three subunits; BchL, BchN and BchB. [4Fe-4S] cluster is required as a cofactor.

The catalysed reaction is chlorophyllide a + oxidized 2[4Fe-4S]-[ferredoxin] + 2 ADP + 2 phosphate = protochlorophyllide a + reduced 2[4Fe-4S]-[ferredoxin] + 2 ATP + 2 H2O. It functions in the pathway porphyrin-containing compound metabolism; bacteriochlorophyll biosynthesis (light-independent). Its function is as follows. Component of the dark-operative protochlorophyllide reductase (DPOR) that uses Mg-ATP and reduced ferredoxin to reduce ring D of protochlorophyllide (Pchlide) to form chlorophyllide a (Chlide). This reaction is light-independent. The L component serves as a unique electron donor to the NB-component of the complex, and binds Mg-ATP. The sequence is that of Light-independent protochlorophyllide reductase iron-sulfur ATP-binding protein from Rhodospirillum centenum (strain ATCC 51521 / SW).